Reading from the N-terminus, the 415-residue chain is Gamma-glutamyl phosphate reductase (415 aa).

Belongs to the gamma-glutamyl phosphate reductase family.

The protein resides in the cytoplasm. The enzyme catalyses L-glutamate 5-semialdehyde + phosphate + NADP(+) = L-glutamyl 5-phosphate + NADPH + H(+). It participates in amino-acid biosynthesis; L-proline biosynthesis; L-glutamate 5-semialdehyde from L-glutamate: step 2/2. Its function is as follows. Catalyzes the NADPH-dependent reduction of L-glutamate 5-phosphate into L-glutamate 5-semialdehyde and phosphate. The product spontaneously undergoes cyclization to form 1-pyrroline-5-carboxylate. The protein is Gamma-glutamyl phosphate reductase of Clostridium perfringens (strain 13 / Type A).